Consider the following 72-residue polypeptide: UPF0270 protein YheU (72 aa).

The protein belongs to the UPF0270 family.

This Salmonella choleraesuis (strain SC-B67) protein is UPF0270 protein YheU.